Reading from the N-terminus, the 896-residue chain is Trehalose-phosphatase (896 aa).

The glycosyltransferase stretch occupies residues 1-554 (MTTTAQDNSP…SNDDMERKMT (554 aa)).

It in the N-terminal section; belongs to the glycosyltransferase 20 family. The protein in the C-terminal section; belongs to the trehalose phosphatase family. In terms of assembly, the trehalose synthase complex is composed of the two catalytic subunits TPS1 and TPS2, and at least one of the two regulatory subunits TPS3 or TSL1. Mg(2+) serves as cofactor.

The protein localises to the cytoplasm. It carries out the reaction alpha,alpha-trehalose 6-phosphate + H2O = alpha,alpha-trehalose + phosphate. Its pathway is carbohydrate biosynthesis. With respect to regulation, inhibited by EDTA. Phosphatase catalytic subunit of the trehalose synthase complex that catalyzes the production of trehalose from glucose-6-phosphate and UDP-alpha-D-glucose in a two step process. This chain is Trehalose-phosphatase, found in Saccharomyces cerevisiae (strain ATCC 204508 / S288c) (Baker's yeast).